The chain runs to 654 residues: Myrosinase-binding protein 2 (654 aa).

4 Jacalin-type lectin domains span residues S2 to A151, L156 to P291, P346 to P489, and A502 to P645. The span at V314–P346 shows a compositional bias: pro residues. The disordered stretch occupies residues V314–N355.

This sequence belongs to the jacalin lectin family. Expressed in flowers. Detected mainly in ovules and styles of immature flowers, but also in pistils, styles, stamens, petals and embryos. Not detected in leaves.

The protein is Myrosinase-binding protein 2 (MBP2) of Arabidopsis thaliana (Mouse-ear cress).